The sequence spans 315 residues: Voltage-dependent calcium channel gamma-3 subunit (315 aa).

4 helical membrane-spanning segments follow: residues 8-28, 104-124, 135-155, and 181-201; these read IQML…TIAV, SSVF…CVAA, ILSA…GIIV, and FGAF…HIYI. Residues 232 to 253 form a disordered region; it reads RRRSSSRSTEPRSRDLSPISKG. Ser-248 is subject to Phosphoserine.

This sequence belongs to the PMP-22/EMP/MP20 family. CACNG subfamily. As to quaternary structure, the L-type calcium channel is composed of five subunits: alpha-1, alpha-2/delta, beta and gamma. Acts as an auxiliary subunit for AMPA-selective glutamate receptors (AMPARs). Found in a complex with GRIA1, GRIA2, GRIA3, GRIA4, CNIH2, CNIH3, CACNG2, CACNG4, CACNG5, CACNG7 and CACNG8. Interacts with AP4M1 and GRIA1; associates GRIA1 with the adaptor protein complex 4 (AP-4) to target GRIA1 to the somatodendritic compartment of neurons.

It is found in the membrane. Its function is as follows. Regulates the trafficking to the somatodendritic compartment and gating properties of AMPA-selective glutamate receptors (AMPARs). Promotes their targeting to the cell membrane and synapses and modulates their gating properties by slowing their rates of activation, deactivation and desensitization. Does not show subunit-specific AMPA receptor regulation and regulates all AMPAR subunits. Thought to stabilize the calcium channel in an inactivated (closed) state. This chain is Voltage-dependent calcium channel gamma-3 subunit (Cacng3), found in Mus musculus (Mouse).